A 506-amino-acid polypeptide reads, in one-letter code: Galactose/methyl galactoside import ATP-binding protein MglA (506 aa).

ABC transporter domains follow at residues 14 to 249 and 259 to 506; these read LEMR…VGRS and NKPG…SLHL. Residue 46-53 coordinates ATP; sequence GENGAGKS.

This sequence belongs to the ABC transporter superfamily. Galactose/methyl galactoside importer (TC 3.A.1.2.3) family. The complex is composed of one ATP-binding protein (MglA), two transmembrane proteins (MglC) and a solute-binding protein (MglB).

It is found in the cell inner membrane. The enzyme catalyses D-galactose(out) + ATP + H2O = D-galactose(in) + ADP + phosphate + H(+). It catalyses the reaction methyl beta-D-galactoside(out) + ATP + H2O = methyl beta-D-galactoside(in) + ADP + phosphate + H(+). With respect to regulation, stimulated 3-fold by galactose and inhibited by vanadate, N-ethylmaleimide, and 5-methoxyindole-2-carboxylic acid. In terms of biological role, part of the ABC transporter complex MglABC involved in galactose/methyl galactoside import. Responsible for energy coupling to the transport system. The sequence is that of Galactose/methyl galactoside import ATP-binding protein MglA from Salmonella typhimurium (strain LT2 / SGSC1412 / ATCC 700720).